Consider the following 289-residue polypeptide: Testis-expressed protein 26 (289 aa).

Residues 1 to 26 (MEQPGPRAPDPSLCHHNLQPTDDPNW) form a disordered region. Mn regions lie at residues 30–42 (ATTM…PKTG), 69–83 (QTQY…SHSK), 144–157 (ISLT…RSKA), 179–193 (DTEF…AKIP), and 233–247 (QTTY…YPDF).

In Homo sapiens (Human), this protein is Testis-expressed protein 26 (TEX26).